We begin with the raw amino-acid sequence, 227 residues long: MTIEDRGDAHVITHSLAKHTLSRLRDTTTEQVSFRKGLVKLGRISGYEIIDGAMETEFTAFETPLTETTGERVTGLDDVVIINVLRAATPFVEGLLKAFPRAKQGVISAGRDEDAGMDADGEFPITVDYVKLPDISEGDTVIVADPMLATGSTMCTVLDHVTDEMPAAGVEDLFVLSAVSAPDGLLRVGDQFPDADLLTVAIDDTLTDDGYIVPGLGDAGDRAFRTT.

A GTP-binding site is contributed by 36 to 40 (KGLVK). Residues Arg-86, Arg-111, and 145-153 (DPMLATGST) each bind 5-phospho-alpha-D-ribose 1-diphosphate. Uracil-binding positions include Ile-212 and 217–219 (GDA). Asp-218 contacts 5-phospho-alpha-D-ribose 1-diphosphate.

This sequence belongs to the UPRTase family. It depends on Mg(2+) as a cofactor.

The catalysed reaction is UMP + diphosphate = 5-phospho-alpha-D-ribose 1-diphosphate + uracil. The protein operates within pyrimidine metabolism; UMP biosynthesis via salvage pathway; UMP from uracil: step 1/1. Its activity is regulated as follows. Allosterically activated by GTP. Functionally, catalyzes the conversion of uracil and 5-phospho-alpha-D-ribose 1-diphosphate (PRPP) to UMP and diphosphate. This Halobacterium salinarum (strain ATCC 700922 / JCM 11081 / NRC-1) (Halobacterium halobium) protein is Uracil phosphoribosyltransferase.